The primary structure comprises 432 residues: SVP1-like protein 2 (432 aa).

WD repeat units follow at residues Ala-223 to Glu-263 and Leu-268 to Gly-307.

Belongs to the WD repeat PROPPIN family.

The protein resides in the vacuole membrane. Its subcellular location is the cytoplasmic vesicle membrane. Involved in mitochondrial or peroxisomal functions and amino acid signaling pathways. The polypeptide is SVP1-like protein 2 (HSV2) (Debaryomyces hansenii (strain ATCC 36239 / CBS 767 / BCRC 21394 / JCM 1990 / NBRC 0083 / IGC 2968) (Yeast)).